Consider the following 132-residue polypeptide: MVKNQAQKKGVKRKQVKNIPSGVVHVKATFNNTIVTITDPAGNVISWASAGKVGYSGSRKSSAFAATVAAQDAAKAAMSSGLKEVEVGLKGTGAGRESAVRALISSGLIVSVIRDETPVPHNGCRPRKRRRV.

This sequence belongs to the universal ribosomal protein uS11 family. Part of the 30S ribosomal subunit. Interacts with proteins S7 and S18. Binds to IF-3.

Its function is as follows. Located on the platform of the 30S subunit, it bridges several disparate RNA helices of the 16S rRNA. Forms part of the Shine-Dalgarno cleft in the 70S ribosome. In Chlamydia trachomatis serovar D (strain ATCC VR-885 / DSM 19411 / UW-3/Cx), this protein is Small ribosomal subunit protein uS11.